Here is a 56-residue protein sequence, read N- to C-terminus: Large ribosomal subunit protein bL32 (56 aa).

Residues 1–26 (MAVQQNKPTRSKRGMRRSHDSLTTAA) are disordered.

It belongs to the bacterial ribosomal protein bL32 family.

This Erwinia tasmaniensis (strain DSM 17950 / CFBP 7177 / CIP 109463 / NCPPB 4357 / Et1/99) protein is Large ribosomal subunit protein bL32.